The following is a 114-amino-acid chain: Fumarate reductase subunit D (114 aa).

3 helical membrane-spanning segments follow: residues 24 to 44 (ISALAFPVLILILGILLPLGI), 49 to 69 (GIIAFAHHWFGKLVILVLTIF), and 94 to 114 (LIFYGLAVLYTVVAIWGVASI).

The protein belongs to the FrdD family. As to quaternary structure, part of an enzyme complex containing four subunits: a flavoprotein (FrdA), an iron-sulfur protein (FrdB), and two hydrophobic anchor proteins (FrdC and FrdD).

Its subcellular location is the cell inner membrane. Functionally, anchors the catalytic components of the fumarate reductase complex to the cell membrane, binds quinones. The chain is Fumarate reductase subunit D from Actinobacillus succinogenes (strain ATCC 55618 / DSM 22257 / CCUG 43843 / 130Z).